Here is a 600-residue protein sequence, read N- to C-terminus: DNA polymerase alpha subunit B (600 aa).

Residues 107-165 (ETLLSSYTTPSKGPLKRVSSTPETPLTKRSVAARSPRQLLSPSSFSPSATPSQKYTSRT) are disordered. S126 bears the Phosphoserine mark. 2 positions are modified to phosphothreonine: T127 and T130. Residues 139-159 (ARSPRQLLSPSSFSPSATPSQ) are compositionally biased toward low complexity. S141, S147, S152, and S154 each carry phosphoserine.

This sequence belongs to the DNA polymerase alpha subunit B family. In terms of assembly, component of the alpha DNA polymerase complex (also known as the alpha DNA polymerase-primase complex) consisting of four subunits: the catalytic subunit POLA1, the regulatory subunit POLA2, and the primase complex subunits PRIM1 and PRIM2 respectively. Within the complex, POLA1 directly interacts with PRIM2. Post-translationally, phosphorylated in a cell cycle-dependent manner, in G2/M phase.

The protein localises to the nucleus. Its function is as follows. Accessory subunit of the DNA polymerase alpha complex (also known as the alpha DNA polymerase-primase complex) which plays an essential role in the initiation of DNA synthesis. During the S phase of the cell cycle, the DNA polymerase alpha complex (composed of a catalytic subunit POLA1, an accessory subunit POLA2 and two primase subunits, the catalytic subunit PRIM1 and the regulatory subunit PRIM2) is recruited to DNA at the replicative forks via direct interactions with MCM10 and WDHD1. The primase subunit of the polymerase alpha complex initiates DNA synthesis by oligomerising short RNA primers on both leading and lagging strands. These primers are initially extended by the polymerase alpha catalytic subunit and subsequently transferred to polymerase delta and polymerase epsilon for processive synthesis on the lagging and leading strand, respectively. The chain is DNA polymerase alpha subunit B (Pola2) from Mus musculus (Mouse).